The following is a 300-amino-acid chain: Tyrosine recombinase XerC (300 aa).

The Core-binding (CB) domain maps to 2–88 (TQEGQLEKRF…SLRSFYTFLL (87 aa)). Residues 109 to 294 (RLPKFFYSEE…TKEHLKSTYM (186 aa)) form the Tyr recombinase domain. Active-site residues include R150, K174, H246, R249, and H272. The O-(3'-phospho-DNA)-tyrosine intermediate role is filled by Y281.

It belongs to the 'phage' integrase family. XerC subfamily. As to quaternary structure, forms a cyclic heterotetrameric complex composed of two molecules of XerC and two molecules of XerD.

The protein resides in the cytoplasm. Its function is as follows. Site-specific tyrosine recombinase, which acts by catalyzing the cutting and rejoining of the recombining DNA molecules. The XerC-XerD complex is essential to convert dimers of the bacterial chromosome into monomers to permit their segregation at cell division. It also contributes to the segregational stability of plasmids. The chain is Tyrosine recombinase XerC from Listeria innocua serovar 6a (strain ATCC BAA-680 / CLIP 11262).